The chain runs to 216 residues: Probable nicotinate-nucleotide adenylyltransferase (216 aa).

Belongs to the NadD family.

It carries out the reaction nicotinate beta-D-ribonucleotide + ATP + H(+) = deamido-NAD(+) + diphosphate. The protein operates within cofactor biosynthesis; NAD(+) biosynthesis; deamido-NAD(+) from nicotinate D-ribonucleotide: step 1/1. Functionally, catalyzes the reversible adenylation of nicotinate mononucleotide (NaMN) to nicotinic acid adenine dinucleotide (NaAD). In Geobacter metallireducens (strain ATCC 53774 / DSM 7210 / GS-15), this protein is Probable nicotinate-nucleotide adenylyltransferase.